Here is a 541-residue protein sequence, read N- to C-terminus: Putative ammonium transporter sll0537 (541 aa).

11 helical membrane passes run 6-26 (TLWL…FMCL), 44-64 (FADF…IMFG), 86-106 (LAVF…IISG), 117-137 (YLLV…DWAW), 161-181 (FAGS…TILV), 203-223 (MPFS…FNGG), 235-255 (IMVN…LISL), 260-280 (MIQV…ITAS), 283-303 (VVMT…AYLV), 316-336 (VDAV…VGLF), and 356-376 (LLGI…FLTL).

This sequence belongs to the ammonia transporter channel (TC 1.A.11.2) family.

The protein localises to the cell membrane. The polypeptide is Putative ammonium transporter sll0537 (Synechocystis sp. (strain ATCC 27184 / PCC 6803 / Kazusa)).